Consider the following 220-residue polypeptide: Ribosomal RNA large subunit methyltransferase E (220 aa).

5 residues coordinate S-adenosyl-L-methionine: Gly64, Trp66, Asp84, Asp100, and Asp125. Residue Lys165 is the Proton acceptor of the active site.

It belongs to the class I-like SAM-binding methyltransferase superfamily. RNA methyltransferase RlmE family.

Its subcellular location is the cytoplasm. It carries out the reaction uridine(2552) in 23S rRNA + S-adenosyl-L-methionine = 2'-O-methyluridine(2552) in 23S rRNA + S-adenosyl-L-homocysteine + H(+). Specifically methylates the uridine in position 2552 of 23S rRNA at the 2'-O position of the ribose in the fully assembled 50S ribosomal subunit. The chain is Ribosomal RNA large subunit methyltransferase E from Thiobacillus denitrificans (strain ATCC 25259 / T1).